The sequence spans 455 residues: Phosphoglucosamine mutase (455 aa).

S102 functions as the Phosphoserine intermediate in the catalytic mechanism. The Mg(2+) site is built by S102, D241, D243, and D245. Position 102 is a phosphoserine (S102).

It belongs to the phosphohexose mutase family. It depends on Mg(2+) as a cofactor. In terms of processing, activated by phosphorylation.

It catalyses the reaction alpha-D-glucosamine 1-phosphate = D-glucosamine 6-phosphate. Catalyzes the conversion of glucosamine-6-phosphate to glucosamine-1-phosphate. The chain is Phosphoglucosamine mutase from Legionella pneumophila (strain Paris).